Here is a 1153-residue protein sequence, read N- to C-terminus: Bifunctional dioxygenase (DOX)-epoxy alcohol synthase (EAS) (1153 aa).

The segment covering 46-56 (SSKESPSRKSS) has biased composition (low complexity). Residues 46–113 (SSKESPSRKS…TQHGDGTYPT (68 aa)) are disordered. Residues 57–74 (TIGQSTRNGSCQADTQKG) show a composition bias toward polar residues. Residues 81–98 (EKPKPVKENPMKKLKEMS) show a composition bias toward basic and acidic residues. Positions 177–525 (TDSLINELWE…DGKFDDDDLV (349 aa)) are fatty acid alpha-dioxygenase. His-276 contacts heme b. The active site involves Tyr-454. His-457 is a heme b binding site. The tract at residues 732-1153 (RVNITSYGGA…VTMRVMWDDE (422 aa)) is epoxy alcohol synthase. Position 1086 (Cys-1086) interacts with heme.

It in the N-terminal section; belongs to the peroxidase family. In the C-terminal section; belongs to the cytochrome P450 family. In terms of assembly, homotetramer. Heme b serves as cofactor. It depends on heme as a cofactor.

It catalyses the reaction (9Z)-octadecenoate + O2 = (8R)-hydroperoxy-(9Z)-octadecenoate. The catalysed reaction is (9Z)-octadecenoate + O2 = 10-hydroperoxy-(8E)-octadecenoate. The enzyme catalyses (9Z,12Z)-octadecadienoate + O2 = (8E,10R,12Z)-10-hydroperoxyoctadeca-8,12-dienoate. It carries out the reaction (9Z,12Z,15Z)-octadecatrienoate + O2 = (10R)-hydroperoxy-(8E,12Z,15Z)-octadecatrienoate. It catalyses the reaction (9Z,12Z,15Z)-octadecatrienoate + O2 = (8R)-hydroperoxy-(9Z,12Z,15Z)-octadecatrienoate. The catalysed reaction is (11Z,14Z)-eicosadienoate + O2 = 12-hydroperoxy-(10E,14Z)-eicosadienoate. The enzyme catalyses (11Z,14Z,17Z)-eicosatrienoate + O2 = 12-hydroperoxy-(10E,14Z,17Z)-eicosatrienoate. It carries out the reaction (12R,13S)-epoxy-(9Z)-octadecenoate + O2 = (12R,13S)-epoxy-(10R)-hydroperoxy-(8E)-octadecenoate. It catalyses the reaction (8E,10R,12Z)-10-hydroperoxyoctadeca-8,12-dienoate = (12S,13R)-epoxy-(10R)-hydroxy-(8E)-octadecenoate. The catalysed reaction is (10R)-hydroperoxy-(8E,12Z,15Z)-octadecatrienoate = 12,13-epoxy-(10R)-hydroxy-(8E,15Z)-octadecadienoate. The enzyme catalyses 12-hydroperoxy-(10E,14Z)-eicosadienoate = 10,11-epoxy-12-hydroxy-(14Z)-eicosenoate. It carries out the reaction 12-hydroperoxy-(10E,14Z,17Z)-eicosatrienoate = 14,15-epoxy-12-hydroxy-(10E,17Z)-eicosadienoate. It catalyses the reaction (13R)-hydroperoxy-(9Z,11E)-octadecadienoate = (12R,13R)-epoxy-(11S)-hydroxy-(9Z)-octadecenoate. The catalysed reaction is (13S)-hydroperoxy-(9Z,11E)-octadecadienoate = (12R,13R)-epoxy-(11S)-hydroxy-(9Z)-octadecenoate. The enzyme catalyses 12-hydroperoxy-(10E,14Z)-eicosadienoate = 14,15-epoxy-12-hydroxy-(10E)-eicosenoate. It carries out the reaction 12-hydroperoxy-(10E,14Z,17Z)-eicosatrienoate = 10,11-epoxy-12-hydroxy-(14Z,17Z)-eicosadienoate. Its function is as follows. Bifunctional dioxygenase (DOX)-epoxy alcohol synthase (EAS) that converts linoleic acid (18:2n-6) sequentially to 10(R)-hydroperoxy-8(E),12(Z)-octadecadienoic acid (10R-HPODE) and 10R-HPODE further to 12 S(13R)-epoxy-10(R)-hydroxy-8(E)-octadecenoic acid as the end product. Oxygenation at C-10 occurs by retention of the pro-R hydrogen of C-8 of 18:2n-6, suggesting antarafacial hydrogen abstraction and oxygenation. The epoxy alcohol is formed from 10R-HPODE, likely by heterolytic cleavage of the dioxygen bond and subsequent intramolecular epoxidation of the 12(Z) double bond. The DOX domain is also able to oxygenate position C-8 of linoleic acid to produce 8(R)-hydroperoxy-8(E),12(Z)-octadecadienoic acid (8R-HPODE). Moreover, the DOX domain can oxygenate alpha-linolenic acid (18:3n-3) at C-8 or C-10 to produce respectively 8HOTrE and 10HOTrE, oleic acid (18:1n-9) at C-8 or C-10 to produce respectively 8-H(P)OME and 10-H(P)OME (with 8R stereoisomer to over 95%), eicosadienoic acid (20:2n-6) at C-10 or C-12 to produce respectively 10(11)-epoxy-12-hydroxy-14(Z)-eicosenoic acid and 14(15)-epoxy-12-hydroxy-10(E)-eicosenoic acid, as well as eicosatrienoic acid (20:3n-3) at C-10 or C-12 to produce respectively 10(11)-epoxy-12-hydroxy-14(Z),17(Z)-eicosadienoic acid and 14(15)-epoxy-12-hydroxy-14(Z),17(Z)-eicosadienoic acid. On the other side, the enzyme EAS domain can also catalyze the conversion of 10HOTrE into 12(13)-epoxy-10(R)-hydroxy-8(E),15(Z)-octadecadienoic acid, 13-R-HPODE into the stereoisomers of 12(13)-epoxy-11-hydroxy-9(Z)-octadecenoic acids (erythro/threo, 1:4), as well as 13S-HPODE into the stereoisomers of 12(13)-epoxy-11-hydroxy-9(Z)-octadecenoic acids (erythro/threo, 1:4) (EAS activity). Gamma-linolenic acid (18:3n-6) is not a substrate. The protein is Bifunctional dioxygenase (DOX)-epoxy alcohol synthase (EAS) of Pyricularia oryzae (strain 70-15 / ATCC MYA-4617 / FGSC 8958) (Rice blast fungus).